Here is a 381-residue protein sequence, read N- to C-terminus: E3 ubiquitin-protein ligase RNF13 (381 aa).

The signal sequence occupies residues 1–34 (MLLSIGMLMLSATQIYTIVTVQLFAFLNLLPVEA). Residues 35-182 (DILAYNFENG…IPEFSLPLEY (148 aa)) are Lumenal-facing. The PA domain occupies 64-160 (LKGFLINSKP…GEASANSLKE (97 aa)). Asparagine 88 carries an N-linked (GlcNAc...) asparagine glycan. Residues 183–203 (YLIPFLIIVGICLILIVIFMI) form a helical membrane-spanning segment. The Cytoplasmic portion of the chain corresponds to 204–381 (TKFVQDRHRA…ERDYRVTNTV (178 aa)). The RING-type; atypical zinc finger occupies 240–282 (CAICLDEYEDGDKLRILPCSHAYHCKCVDPWLTKTKKTCPVCK). The interval 285 to 381 (VVPSQGDSDS…ERDYRVTNTV (97 aa)) is disordered. Composition is skewed to acidic residues over residues 292–305 (SDSETDSSQEENEV) and 339–353 (SEYEEDDNDNIDSSD). Basic and acidic residues predominate over residues 370–381 (NDERDYRVTNTV).

Widely expressed (at protein level). Lowest levels in the liver, moderate levels in the heart, intestine and spleen, and high levels in skeletal muscle, kidney, proventriculus and brain. Also expressed in inner ear after noise exposure.

The protein resides in the endoplasmic reticulum membrane. Its subcellular location is the late endosome membrane. The protein localises to the lysosome membrane. It localises to the nucleus inner membrane. The catalysed reaction is S-ubiquitinyl-[E2 ubiquitin-conjugating enzyme]-L-cysteine + [acceptor protein]-L-lysine = [E2 ubiquitin-conjugating enzyme]-L-cysteine + N(6)-ubiquitinyl-[acceptor protein]-L-lysine.. It participates in protein modification; protein ubiquitination. Its function is as follows. E3 ubiquitin-protein ligase that regulates cell proliferation. Involved in apoptosis regulation. Mediates ER stress-induced activation of JNK signaling pathway and apoptosis by promoting ERN1 activation and splicing of XBP1 mRNA. This is E3 ubiquitin-protein ligase RNF13 from Gallus gallus (Chicken).